Here is a 905-residue protein sequence, read N- to C-terminus: DNA gyrase subunit A (905 aa).

The region spanning 35 to 524 (IPDVRDGLKP…GEFDQDIEDL (490 aa)) is the Topo IIA-type catalytic domain. Tyrosine 123 serves as the catalytic O-(5'-phospho-DNA)-tyrosine intermediate. Positions 551 to 557 (QKRGGKG) match the GyrA-box motif. A disordered region spans residues 885–905 (TAESEEDSELEEEGLEQSEEV). Acidic residues predominate over residues 886–905 (AESEEDSELEEEGLEQSEEV).

Belongs to the type II topoisomerase GyrA/ParC subunit family. Heterotetramer, composed of two GyrA and two GyrB chains. In the heterotetramer, GyrA contains the active site tyrosine that forms a transient covalent intermediate with DNA, while GyrB binds cofactors and catalyzes ATP hydrolysis.

The protein localises to the cytoplasm. It catalyses the reaction ATP-dependent breakage, passage and rejoining of double-stranded DNA.. Its function is as follows. A type II topoisomerase that negatively supercoils closed circular double-stranded (ds) DNA in an ATP-dependent manner to modulate DNA topology and maintain chromosomes in an underwound state. Negative supercoiling favors strand separation, and DNA replication, transcription, recombination and repair, all of which involve strand separation. Also able to catalyze the interconversion of other topological isomers of dsDNA rings, including catenanes and knotted rings. Type II topoisomerases break and join 2 DNA strands simultaneously in an ATP-dependent manner. The chain is DNA gyrase subunit A from Rickettsia conorii (strain ATCC VR-613 / Malish 7).